Here is a 98-residue protein sequence, read N- to C-terminus: Bombyxin A-3 homolog (98 aa).

Positions 1–18 are cleaved as a signal peptide; it reads MRTQVLFLVLEVAAMASG. 3 cysteine pairs are disulfide-bonded: cysteine 26–cysteine 85, cysteine 38–cysteine 98, and cysteine 84–cysteine 89. Residues 47-75 constitute a propeptide, c peptide like; sequence TPYTSSESEGYGWRWLAPQRARQLAGARG.

The protein belongs to the insulin family. In terms of assembly, heterodimer of a B chain and an A chain linked by two disulfide bonds.

The protein localises to the secreted. Functionally, brain peptide responsible for activation of prothoracic glands to produce ecdysone in insects. The protein is Bombyxin A-3 homolog (SBXA3) of Samia cynthia (Ailanthus silkmoth).